The following is a 66-amino-acid chain: MSRTSIILVLAIFVAIAAIAQCRNIQYDVDEISPEAAFRYAQWGEIPHKRVPSAGDMMVRFGKRSV.

The signal sequence occupies residues M1–C22. Residues R23–H48 constitute a propeptide that is removed on maturation. A Phenylalanine amide modification is found at F61. Positions S65–V66 are excised as a propeptide.

Belongs to the FARP (FMRFamide related peptide) family.

The protein resides in the secreted. In terms of biological role, FMRFamides and FMRFamide-like peptides are neuropeptides. The polypeptide is FMRFamide-like neuropeptides 24 (Caenorhabditis briggsae).